We begin with the raw amino-acid sequence, 230 residues long: Type 4 apparatus protein DotY (230 aa).

Residues 202–230 form a disordered region; that stretch reads EPKALETKREEIRQEIESGAEAPTTQSIR. Residues 204–217 are compositionally biased toward basic and acidic residues; the sequence is KALETKREEIRQEI.

As to quaternary structure, the T4BSS is a complex nanomachine composed of several subcomplexes. This subunit is part of the Type IV Coupling Complex (T4CC), a subcomplex composed of the DotLMNYZ core and the IcmSW-LvgA adapter subunits, linked by the C-terminal tail of DotL. Six DotLMNYZ hetero-pentameric units may assemble into a hexameric nanomachine, forming an inner membrane channel for effectors to pass through. Interacts exclusively with DotZ. DotY and DotZ are co-dependent for the assembly into the T4CC.

The protein resides in the cytoplasm. Component of the Dot/Icm type IVB secretion system (T4BSS), which is used to inject bacterial effector proteins into eukaryotic host cells. Part of a subcomplex which recruits effector proteins and delivers them to the core transmembrane subcomplex. DotY and DotZ play a role in effector translocation, but are not essential and do not influence the stability of the subcomplex main components. The DotY/DotZ main function is to optimize secretion by modulating the delivery trajectory of the IcmSW module and the localization of the machinery to the poles. The protein is Type 4 apparatus protein DotY of Legionella pneumophila subsp. pneumophila (strain Philadelphia 1 / ATCC 33152 / DSM 7513).